The primary structure comprises 379 residues: UDP-N-acetylglucosamine--N-acetylmuramyl-(pentapeptide) pyrophosphoryl-undecaprenol N-acetylglucosamine transferase (379 aa).

Residues 17–19, N128, R169, S197, and Q298 contribute to the UDP-N-acetyl-alpha-D-glucosamine site; that span reads TGG.

This sequence belongs to the glycosyltransferase 28 family. MurG subfamily.

The protein resides in the cell inner membrane. It carries out the reaction di-trans,octa-cis-undecaprenyl diphospho-N-acetyl-alpha-D-muramoyl-L-alanyl-D-glutamyl-meso-2,6-diaminopimeloyl-D-alanyl-D-alanine + UDP-N-acetyl-alpha-D-glucosamine = di-trans,octa-cis-undecaprenyl diphospho-[N-acetyl-alpha-D-glucosaminyl-(1-&gt;4)]-N-acetyl-alpha-D-muramoyl-L-alanyl-D-glutamyl-meso-2,6-diaminopimeloyl-D-alanyl-D-alanine + UDP + H(+). Its pathway is cell wall biogenesis; peptidoglycan biosynthesis. In terms of biological role, cell wall formation. Catalyzes the transfer of a GlcNAc subunit on undecaprenyl-pyrophosphoryl-MurNAc-pentapeptide (lipid intermediate I) to form undecaprenyl-pyrophosphoryl-MurNAc-(pentapeptide)GlcNAc (lipid intermediate II). This chain is UDP-N-acetylglucosamine--N-acetylmuramyl-(pentapeptide) pyrophosphoryl-undecaprenol N-acetylglucosamine transferase, found in Brucella canis (strain ATCC 23365 / NCTC 10854 / RM-666).